The following is a 102-amino-acid chain: Large ribosomal subunit protein bL21 (102 aa).

Belongs to the bacterial ribosomal protein bL21 family. Part of the 50S ribosomal subunit. Contacts protein L20.

In terms of biological role, this protein binds to 23S rRNA in the presence of protein L20. This Exiguobacterium sibiricum (strain DSM 17290 / CCUG 55495 / CIP 109462 / JCM 13490 / 255-15) protein is Large ribosomal subunit protein bL21.